The primary structure comprises 312 residues: HPr kinase/phosphorylase (312 aa).

Active-site residues include His139 and Lys160. Gly154–Ser161 provides a ligand contact to ATP. Ser161 provides a ligand contact to Mg(2+). Asp178 serves as the catalytic Proton acceptor; for phosphorylation activity. Proton donor; for dephosphorylation activity. An important for the catalytic mechanism of both phosphorylation and dephosphorylation region spans residues Leu202–Asn211. Glu203 provides a ligand contact to Mg(2+). The active site involves Arg244. The important for the catalytic mechanism of dephosphorylation stretch occupies residues Pro265–Arg270.

Belongs to the HPrK/P family. Homohexamer. Mg(2+) serves as cofactor.

It catalyses the reaction [HPr protein]-L-serine + ATP = [HPr protein]-O-phospho-L-serine + ADP + H(+). The catalysed reaction is [HPr protein]-O-phospho-L-serine + phosphate + H(+) = [HPr protein]-L-serine + diphosphate. In terms of biological role, catalyzes the ATP- as well as the pyrophosphate-dependent phosphorylation of a specific serine residue in HPr, a phosphocarrier protein of the phosphoenolpyruvate-dependent sugar phosphotransferase system (PTS). HprK/P also catalyzes the pyrophosphate-producing, inorganic phosphate-dependent dephosphorylation (phosphorolysis) of seryl-phosphorylated HPr (P-Ser-HPr). The two antagonistic activities of HprK/P are regulated by several intracellular metabolites, which change their concentration in response to the absence or presence of rapidly metabolisable carbon sources (glucose, fructose, etc.) in the growth medium. Therefore, by controlling the phosphorylation state of HPr, HPrK/P is a sensor enzyme that plays a major role in the regulation of carbon metabolism and sugar transport: it mediates carbon catabolite repression (CCR), and regulates PTS-catalyzed carbohydrate uptake and inducer exclusion. This Listeria monocytogenes serotype 4b (strain CLIP80459) protein is HPr kinase/phosphorylase.